The sequence spans 218 residues: Glutathione S-transferase class-mu 26 kDa isozyme (218 aa).

In terms of domain architecture, GST N-terminal spans 1–83; that stretch reads MAPKFGYWKV…YIADKHNMLG (83 aa). Glutathione is bound by residues 7 to 8, 41 to 45, 54 to 55, and 67 to 68; these read YW, WSNDK, NL, and QS. The GST C-terminal domain maps to 85–203; it reads CPKERAEISM…NSSRYIKWPL (119 aa). Tyr111 contacts substrate.

It belongs to the GST superfamily. Mu family. In terms of assembly, homodimer. As to expression, tegument and in subtegumentary parenchymal cells. GST 26 may be actively excreted by adult worms.

The catalysed reaction is RX + glutathione = an S-substituted glutathione + a halide anion + H(+). In terms of biological role, conjugation of reduced glutathione to a wide number of exogenous and endogenous hydrophobic electrophiles. GST isoenzymes appear to play a central role in the parasite detoxification system. Other functions are also suspected including a role in increasing the solubility of haematin in the parasite gut. The polypeptide is Glutathione S-transferase class-mu 26 kDa isozyme (Schistosoma mansoni (Blood fluke)).